Here is a 201-residue protein sequence, read N- to C-terminus: 3-isopropylmalate dehydratase small subunit (201 aa).

Belongs to the LeuD family. LeuD type 1 subfamily. As to quaternary structure, heterodimer of LeuC and LeuD.

It carries out the reaction (2R,3S)-3-isopropylmalate = (2S)-2-isopropylmalate. It functions in the pathway amino-acid biosynthesis; L-leucine biosynthesis; L-leucine from 3-methyl-2-oxobutanoate: step 2/4. In terms of biological role, catalyzes the isomerization between 2-isopropylmalate and 3-isopropylmalate, via the formation of 2-isopropylmaleate. In Shewanella amazonensis (strain ATCC BAA-1098 / SB2B), this protein is 3-isopropylmalate dehydratase small subunit.